A 175-amino-acid chain; its full sequence is MGRTIENKQKIVTEIKSLLDDSEMAVVLDYKGLTIKEMSDLRSRLQTNNGICKVTKNSLMRKAIDGNSNWTDLESLLTGTNAFVLIKEDVGGAVKAIQSFQKETKKSETKGALFEGRLLSESEIKEIASLPSREVLMAKIAGALNGVATKIAISINEVPSGIARSLKQHSEKSES.

It belongs to the universal ribosomal protein uL10 family. Part of the ribosomal stalk of the 50S ribosomal subunit. The N-terminus interacts with L11 and the large rRNA to form the base of the stalk. The C-terminus forms an elongated spine to which L12 dimers bind in a sequential fashion forming a multimeric L10(L12)X complex.

Its function is as follows. Forms part of the ribosomal stalk, playing a central role in the interaction of the ribosome with GTP-bound translation factors. This is Large ribosomal subunit protein uL10 from Prochlorococcus marinus subsp. pastoris (strain CCMP1986 / NIES-2087 / MED4).